The primary structure comprises 531 residues: Type 2 DNA topoisomerase 6 subunit B (531 aa).

ATP-binding positions include Asn-42, Asp-76, 97–98, 106–113, and Lys-427; these read SK and GMYGLGVK.

This sequence belongs to the TOP6B family. Homodimer. Heterotetramer of two Top6A and two Top6B chains.

The enzyme catalyses ATP-dependent breakage, passage and rejoining of double-stranded DNA.. In terms of biological role, relaxes both positive and negative superturns and exhibits a strong decatenase activity. The chain is Type 2 DNA topoisomerase 6 subunit B from Metallosphaera sedula (strain ATCC 51363 / DSM 5348 / JCM 9185 / NBRC 15509 / TH2).